The primary structure comprises 319 residues: Glutathione synthetase (319 aa).

An ATP-grasp domain is found at 127-311; sequence KIFVTEFADL…VASLLWDAIE (185 aa). 153-209 contacts ATP; it reads RNEMGDIILKPLYGNGGAGVFHSARDDRNFSSLLEMFGQMFREPYIAQEYLPDVRKG. Positions 282 and 284 each coordinate Mg(2+).

Belongs to the prokaryotic GSH synthase family. Mg(2+) serves as cofactor. The cofactor is Mn(2+).

It catalyses the reaction gamma-L-glutamyl-L-cysteine + glycine + ATP = glutathione + ADP + phosphate + H(+). Its pathway is sulfur metabolism; glutathione biosynthesis; glutathione from L-cysteine and L-glutamate: step 2/2. In Agrobacterium fabrum (strain C58 / ATCC 33970) (Agrobacterium tumefaciens (strain C58)), this protein is Glutathione synthetase.